A 670-amino-acid polypeptide reads, in one-letter code: Aurofusarin cluster transcription factor aurR2 (670 aa).

Residues 12 to 38 constitute a DNA-binding region (zn(2)-C6 fungal-type); the sequence is CVPCQHRKIRCNGQTPCAYCIRTGKEC. Disordered stretches follow at residues 57–76 and 92–115; these read RLTA…IVSG and GDEM…RTDT. Residues 92–113 show a composition bias toward basic and acidic residues; the sequence is GDEMQGKDVSPDPERPPLRTRT.

The protein resides in the nucleus. Transcription factor that may participate in the regulation of the expression of the gene cluster that mediates the biosynthesis of aurofusarin, a red mycelium pigment which is acting as a mycotoxin. This Gibberella zeae (strain ATCC MYA-4620 / CBS 123657 / FGSC 9075 / NRRL 31084 / PH-1) (Wheat head blight fungus) protein is Aurofusarin cluster transcription factor aurR2.